The chain runs to 453 residues: Glutamate--tRNA ligase 2 (453 aa).

The 'HIGH' region signature appears at 10-20 (PSPTGFLHIGG). The short motif at 232–236 (KLSKR) is the 'KMSKS' region element. Lysine 235 provides a ligand contact to ATP.

Belongs to the class-I aminoacyl-tRNA synthetase family. Glutamate--tRNA ligase type 1 subfamily. In terms of assembly, monomer.

The protein localises to the cytoplasm. The enzyme catalyses tRNA(Glu) + L-glutamate + ATP = L-glutamyl-tRNA(Glu) + AMP + diphosphate. In terms of biological role, catalyzes the attachment of glutamate to tRNA(Glu) in a two-step reaction: glutamate is first activated by ATP to form Glu-AMP and then transferred to the acceptor end of tRNA(Glu). The chain is Glutamate--tRNA ligase 2 from Wolbachia sp. subsp. Brugia malayi (strain TRS).